Consider the following 176-residue polypeptide: Crossover junction endodeoxyribonuclease RuvC (176 aa).

Active-site residues include Asp-7, Glu-67, and Asp-139. The Mg(2+) site is built by Asp-7, Glu-67, and Asp-139.

It belongs to the RuvC family. In terms of assembly, homodimer which binds Holliday junction (HJ) DNA. The HJ becomes 2-fold symmetrical on binding to RuvC with unstacked arms; it has a different conformation from HJ DNA in complex with RuvA. In the full resolvosome a probable DNA-RuvA(4)-RuvB(12)-RuvC(2) complex forms which resolves the HJ. Mg(2+) serves as cofactor.

The protein localises to the cytoplasm. The enzyme catalyses Endonucleolytic cleavage at a junction such as a reciprocal single-stranded crossover between two homologous DNA duplexes (Holliday junction).. The RuvA-RuvB-RuvC complex processes Holliday junction (HJ) DNA during genetic recombination and DNA repair. Endonuclease that resolves HJ intermediates. Cleaves cruciform DNA by making single-stranded nicks across the HJ at symmetrical positions within the homologous arms, yielding a 5'-phosphate and a 3'-hydroxyl group; requires a central core of homology in the junction. The consensus cleavage sequence is 5'-(A/T)TT(C/G)-3'. Cleavage occurs on the 3'-side of the TT dinucleotide at the point of strand exchange. HJ branch migration catalyzed by RuvA-RuvB allows RuvC to scan DNA until it finds its consensus sequence, where it cleaves and resolves the cruciform DNA. The protein is Crossover junction endodeoxyribonuclease RuvC of Pelobacter propionicus (strain DSM 2379 / NBRC 103807 / OttBd1).